The chain runs to 219 residues: Cytochrome c biogenesis ATP-binding export protein CcmA (219 aa).

The region spanning 10–218 is the ABC transporter domain; sequence ISAVNLTCIR…TLDYSYDSAV (209 aa). 42–49 is an ATP binding site; it reads GPNGSGKT.

This sequence belongs to the ABC transporter superfamily. CcmA exporter (TC 3.A.1.107) family. As to quaternary structure, the complex is composed of two ATP-binding proteins (CcmA) and two transmembrane proteins (CcmB).

Its subcellular location is the cell inner membrane. The catalysed reaction is heme b(in) + ATP + H2O = heme b(out) + ADP + phosphate + H(+). Its function is as follows. Part of the ABC transporter complex CcmAB involved in the biogenesis of c-type cytochromes; once thought to export heme, this seems not to be the case, but its exact role is uncertain. Responsible for energy coupling to the transport system. The sequence is that of Cytochrome c biogenesis ATP-binding export protein CcmA from Colwellia psychrerythraea (strain 34H / ATCC BAA-681) (Vibrio psychroerythus).